A 424-amino-acid polypeptide reads, in one-letter code: L-glutamine:scyllo-inosose aminotransferase (424 aa).

The segment at 1–21 (MDSSLAISGGPRLSNREWPRW) is disordered. Lys-202 carries the post-translational modification N6-(pyridoxal phosphate)lysine.

The protein belongs to the DegT/DnrJ/EryC1 family. L-glutamine:2-deoxy-scyllo-inosose/scyllo-inosose aminotransferase subfamily. In terms of assembly, homodimer. Pyridoxal 5'-phosphate serves as cofactor.

It catalyses the reaction scyllo-inosose + L-glutamine = 1-amino-1-deoxy-scyllo-inositol + 2-oxoglutaramate. The protein operates within antibiotic biosynthesis; streptomycin biosynthesis. Its function is as follows. Catalyzes the PLP-dependent transamination of scyllo-inosose to form scyllo-inosamine. This Streptomyces griseus protein is L-glutamine:scyllo-inosose aminotransferase (stsC).